Here is a 518-residue protein sequence, read N- to C-terminus: MDMYNNNIGMFRSLVCSSAPPFTEGHMCSDSHTALCDDLSSDEEMEIEELEKKIWRDKQRLKRLKEMAKNGLGTRLLLKQQHDDFPEHSSKRTMYKAQDGILKYMSKTMERYKAQGFVYGIVLENGKTVAGSSDNLREWWKDKVRFDRNGPAAIIKHQRDINLSDGSDSGSEVGDSTAQKLLELQDTTLGALLSALFPHCNPPQRRFPLEKGVTPPWWPTGKEDWWDQLSLPVDFRGVPPPYKKPHDLKKLWKIGVLIGVIRHMASDISNIPNLVRRSRSLQEKMTSREGALWLAALYREKAIVDQIAMSRENNNTSNFLVPATGGDPDVLFPESTDYDVELIGGTHRTNQQYPEFENNYNCVYKRKFEEDFGMPMHPTLLTCENSLCPYSQPHMGFLDRNLRENHQMTCPYKVTSFYQPTKPYGMTGLMVPCPDYNGMQQQVQSFQDQFNHPNDLYRPKAPQRGNDDLVEDLNPSPSTLNQNLGLVLPTDFNGGEETVGTENNLHNQGQELPTSWIQ.

A coiled-coil region spans residues Asp37–Gly73. The tract at residues Phe450 to Gln518 is disordered. 2 stretches are compositionally biased toward polar residues: residues Pro475–Leu484 and Gly500–Gln518.

Belongs to the EIN3 family. In terms of assembly, acts as a homodimer to bind the primary ethylene response element.

Its subcellular location is the nucleus. Probable transcription factor acting as a positive regulator in the ethylene response pathway. Could bind the primary ethylene response element present in the ETHYLENE-RESPONSE-FACTOR1 promoter. The polypeptide is ETHYLENE INSENSITIVE 3-like 2 protein (EIL2) (Arabidopsis thaliana (Mouse-ear cress)).